A 277-amino-acid polypeptide reads, in one-letter code: Large ribosomal subunit protein uL2c (277 aa).

Positions 224 to 257 (VMNPIDHPHGGGEGRAPIGRKKPLTPWGHPALGR) are disordered.

It belongs to the universal ribosomal protein uL2 family. In terms of assembly, part of the 50S ribosomal subunit.

It is found in the plastid. The protein resides in the chloroplast. The sequence is that of Large ribosomal subunit protein uL2c (rpl2) from Anthoceros angustus (Hornwort).